The primary structure comprises 260 residues: MRSLSRFRLITFDVTNTLLQFRTTPGKQYGEIGALFGARCDNNELAKNFKANWYKMNRDYPNFGRDTNPQMEWQQWWRKLIAGTFAESGAAIPDEKLHNFSNHLIELYKTSICWQPCNGSVELLQQLRKELKPEKCKLGVIANFDPRLPTLLQNTKLDQYLDFAINSYEVQAEKPDPQIFQKAMEKSGLKNLKPEECLHIGDGPTTDYLAAKELGWHSALVHEKSYAYLVKKYGEDIDRDHVFPSLYDFHKKISDGAVVW.

The polypeptide is Rhythmically expressed gene 2 protein (Reg-2) (Drosophila melanogaster (Fruit fly)).